We begin with the raw amino-acid sequence, 220 residues long: uncharacterized protein (220 aa).

This is an uncharacterized protein from Sinorhizobium fredii (strain NBRC 101917 / NGR234).